Reading from the N-terminus, the 293-residue chain is Nucleotide-binding protein Bcer98_3698 (293 aa).

14–21 (GMSGAGKT) is an ATP binding site. GTP is bound at residue 65–68 (DLRG).

The protein belongs to the RapZ-like family.

Functionally, displays ATPase and GTPase activities. This Bacillus cytotoxicus (strain DSM 22905 / CIP 110041 / 391-98 / NVH 391-98) protein is Nucleotide-binding protein Bcer98_3698.